The primary structure comprises 841 residues: DNA ligase (841 aa).

NAD(+) is bound by residues 54-58 (DAEYD), 103-104 (SL), and Glu143. The N6-AMP-lysine intermediate role is filled by Lys145. NAD(+) is bound by residues Arg166, Glu203, Lys321, and Lys345. Cys471, Cys474, Cys489, and Cys495 together coordinate Zn(2+). The interval 554 to 575 (KTVAESDQMPSEGSSVGASGKH) is disordered. Residues 561 to 570 (QMPSEGSSVG) are compositionally biased toward polar residues. In terms of domain architecture, BRCT spans 764 to 841 (GINKAVAGKT…SEAELLTLLG (78 aa)).

The protein belongs to the NAD-dependent DNA ligase family. LigA subfamily. Mg(2+) serves as cofactor. Requires Mn(2+) as cofactor.

The catalysed reaction is NAD(+) + (deoxyribonucleotide)n-3'-hydroxyl + 5'-phospho-(deoxyribonucleotide)m = (deoxyribonucleotide)n+m + AMP + beta-nicotinamide D-nucleotide.. Functionally, DNA ligase that catalyzes the formation of phosphodiester linkages between 5'-phosphoryl and 3'-hydroxyl groups in double-stranded DNA using NAD as a coenzyme and as the energy source for the reaction. It is essential for DNA replication and repair of damaged DNA. This is DNA ligase from Neisseria meningitidis serogroup C / serotype 2a (strain ATCC 700532 / DSM 15464 / FAM18).